Consider the following 746-residue polypeptide: GTPase-activating protein GYP7 (746 aa).

A phosphoserine mark is found at serine 265 and serine 339. A Rab-GAP TBC domain is found at 385–633 (LENDSLRGKV…HIWENFWTFY (249 aa)). A disordered region spans residues 470 to 505 (TIDGLPPPPQQLPANENNSTSPESANDESDDADDGV). A compositionally biased stretch (polar residues) spans 481–491 (LPANENNSTSP).

The protein localises to the cytoplasm. In terms of biological role, GTPase-activating protein (GAP) that most effectively accelerates the intrinsic GTPase activity of Ypt/Rab-type GTPase YPT7 involved in vacuole docking and fusion. It is also active, but to a lesser extent, on YPT31, YPT32, YPT1, YPT6 and SEC4. Provides a catalytic arginine (arginine finger) in trans to accelerate the GTP hydrolysis rate of the substrate GTPase. The protein is GTPase-activating protein GYP7 (GYP7) of Saccharomyces cerevisiae (strain ATCC 204508 / S288c) (Baker's yeast).